Consider the following 304-residue polypeptide: Aspartate carbamoyltransferase catalytic subunit (304 aa).

Arg54 and Thr55 together coordinate carbamoyl phosphate. Lys83 lines the L-aspartate pocket. Residues Arg104, His132, and Gln135 each coordinate carbamoyl phosphate. L-aspartate-binding residues include Arg165 and Arg226. Residues Leu265 and Pro266 each coordinate carbamoyl phosphate.

The protein belongs to the aspartate/ornithine carbamoyltransferase superfamily. ATCase family. In terms of assembly, heterooligomer of catalytic and regulatory chains.

The enzyme catalyses carbamoyl phosphate + L-aspartate = N-carbamoyl-L-aspartate + phosphate + H(+). It participates in pyrimidine metabolism; UMP biosynthesis via de novo pathway; (S)-dihydroorotate from bicarbonate: step 2/3. Functionally, catalyzes the condensation of carbamoyl phosphate and aspartate to form carbamoyl aspartate and inorganic phosphate, the committed step in the de novo pyrimidine nucleotide biosynthesis pathway. The protein is Aspartate carbamoyltransferase catalytic subunit of Pyrobaculum neutrophilum (strain DSM 2338 / JCM 9278 / NBRC 100436 / V24Sta) (Thermoproteus neutrophilus).